The chain runs to 496 residues: Tripartite motif-containing protein 30A (496 aa).

The RING-type zinc finger occupies 15 to 59; sequence CPICLELLKEPVSADCNHSFCRACITLNYESNRNTDGKGNCPVCR. The segment at 91-132 adopts a B box-type zinc-finger fold; the sequence is QKVNICAQHGEKLRLFCRKDMMVICWLCERSQEHRGHQTALI. Cys96, His99, Cys118, and His124 together coordinate Zn(2+). Residues 173–239 are a coiled coil; that stretch reads NQIQINVENV…RDLISDVEHH (67 aa). The tract at residues 205-210 is highly hydrophilic; that stretch reads KKEKKE. Residues 268 to 276 carry the Nuclear localization signal motif; it reads TVPQKRKRT. One can recognise a B30.2/SPRY domain in the interval 281–496; sequence DLKGMLQVYQ…EPMTICGPPS (216 aa).

As to quaternary structure, homomultimer. Interacts with NR2C2/TAK1, TAB2 and TAB3. Does not interact with NLRP3, NLRC4 or TAB1. Highly expressed in spleen and lymph nodes (at protein level).

Its subcellular location is the cytoplasm. The protein localises to the nucleus. Its function is as follows. Trans-acting factor that regulates gene expression of interleukin 2 receptor alpha chain. May affect IL2R-alpha expression through cis-acting negative regulatory elements or through competition with proteins that bind to enhancer or activator sequences. Negatively regulates Toll-like receptor (TLR)-mediated activation of NFKB by promoting degradation of TAB2 and TAB3 and preventing TRAF6 autoubiquitination. Negatively regulates production of reactive oxygen species (ROS) which inhibits activation of the NLRP3 inflammasome complex. This, in turn, regulates activation of CASP1 and subsequent cleavage of IL1B and IL18. No activity detected against a range of retroviruses including a number of lentiviruses, gammaretroviruses and betaretroviruses. The chain is Tripartite motif-containing protein 30A (Trim30a) from Mus musculus (Mouse).